Here is a 166-residue protein sequence, read N- to C-terminus: MQNCIKLVPLALKCPQRAISTSAVLDGKRNFRKFNVHSKRGTRVVKEAQKTMANPPVPIDKRGVRDTGILVDGKFVEIPEKIPDIIVPDLTDCKLKPYVSYKAPEVVQSEFTSLDLFNAVYSKKIVEDFKAGSLQADGSPKEPSAEEKLTSSEAFLRARRTGSDIF.

The transit peptide at 1–26 (MQNCIKLVPLALKCPQRAISTSAVLD) directs the protein to the mitochondrion.

Belongs to the mitochondrion-specific ribosomal protein mL41 family. As to quaternary structure, component of the mitochondrial ribosome large subunit (39S) which comprises a 16S rRNA and about 50 distinct proteins.

The protein localises to the mitochondrion. The polypeptide is Large ribosomal subunit protein mL41 (mRpL41) (Drosophila pseudoobscura pseudoobscura (Fruit fly)).